A 354-amino-acid chain; its full sequence is Ferrochelatase (354 aa).

Fe cation contacts are provided by His214 and Glu295.

It belongs to the ferrochelatase family.

Its subcellular location is the cytoplasm. The catalysed reaction is heme b + 2 H(+) = protoporphyrin IX + Fe(2+). The protein operates within porphyrin-containing compound metabolism; protoheme biosynthesis; protoheme from protoporphyrin-IX: step 1/1. Its function is as follows. Catalyzes the ferrous insertion into protoporphyrin IX. This chain is Ferrochelatase, found in Burkholderia vietnamiensis (strain G4 / LMG 22486) (Burkholderia cepacia (strain R1808)).